Here is a 116-residue protein sequence, read N- to C-terminus: Putative oxygen-evolving enhancer protein 1 (116 aa).

This sequence belongs to the PsbO family.

It localises to the plastid. It is found in the chloroplast thylakoid membrane. Functionally, stabilizes the manganese cluster which is the primary site of water splitting. The protein is Putative oxygen-evolving enhancer protein 1 of Pinus strobus (Eastern white pine).